Here is a 176-residue protein sequence, read N- to C-terminus: ATP synthase subunit b (176 aa).

The chain crosses the membrane as a helical span at residues 14–34 (STTLGTMIVVSGAFLILMLLL).

The protein belongs to the ATPase B chain family. F-type ATPases have 2 components, F(1) - the catalytic core - and F(0) - the membrane proton channel. F(1) has five subunits: alpha(3), beta(3), gamma(1), delta(1), epsilon(1). F(0) has three main subunits: a(1), b(2) and c(10-14). The alpha and beta chains form an alternating ring which encloses part of the gamma chain. F(1) is attached to F(0) by a central stalk formed by the gamma and epsilon chains, while a peripheral stalk is formed by the delta and b chains.

Its subcellular location is the cell membrane. Its function is as follows. F(1)F(0) ATP synthase produces ATP from ADP in the presence of a proton or sodium gradient. F-type ATPases consist of two structural domains, F(1) containing the extramembraneous catalytic core and F(0) containing the membrane proton channel, linked together by a central stalk and a peripheral stalk. During catalysis, ATP synthesis in the catalytic domain of F(1) is coupled via a rotary mechanism of the central stalk subunits to proton translocation. Functionally, component of the F(0) channel, it forms part of the peripheral stalk, linking F(1) to F(0). This is ATP synthase subunit b from Enterococcus faecalis (strain ATCC 700802 / V583).